The chain runs to 369 residues: Putative 2-aminoethylphosphonate import ATP-binding protein PhnT (369 aa).

The ABC transporter domain maps to 19–250 (IVLDSLRVAY…PPNRFASEFL (232 aa)). Position 51 to 58 (51 to 58 (GPSGSGKT)) interacts with ATP.

The protein belongs to the ABC transporter superfamily. 2-aminoethylphosphonate importer (TC 3.A.1.11.5) family.

The protein localises to the cell inner membrane. Probably part of the PhnSTUV complex (TC 3.A.1.11.5) involved in 2-aminoethylphosphonate import. Probably responsible for energy coupling to the transport system. This Salmonella choleraesuis (strain SC-B67) protein is Putative 2-aminoethylphosphonate import ATP-binding protein PhnT (phnT).